Consider the following 76-residue polypeptide: Conotoxin Vc6.3 (76 aa).

The signal sequence occupies residues 1–22; sequence MKLTCVMIVAVLFLTANTFATA. A propeptide spanning residues 23 to 50 is cleaved from the precursor; sequence DDPRNGLRDLFSIAHHEMKNPEASKLNE. 3 cysteine pairs are disulfide-bonded: Cys-52–Cys-66, Cys-59–Cys-70, and Cys-67–Cys-75.

Belongs to the conotoxin O1 superfamily. Expressed by the venom duct.

Its subcellular location is the secreted. The protein is Conotoxin Vc6.3 of Conus victoriae (Queen Victoria cone).